Reading from the N-terminus, the 75-residue chain is Venom serine protease inhibitor BiVSPI (75 aa).

An N-terminal signal peptide occupies residues 1–20 (MSRILFVFLAVMAIFSTSFG). Intrachain disulfides connect C23–C55, C32–C51, C35–C47, C39–C75, and C57–C69. Residues 23–75 (CGLNEEFKSCGSCEPTCAKPRVTICTMECKIGCQCKSGYLRNGEGTCVLPEKC) form the TIL domain.

It belongs to the serine protease inhibitor-like (TIL domain-containing) family. Post-translationally, may be O-glycosylated. Expressed by the venom gland (at protein level) and expressed in fat body.

It is found in the secreted. The protein localises to the target cell membrane. Functionally, antimicrobial venom serine protease inhibitor. Exhibits inhibitory activity against chymotrypsin (IC(50)=19.56 nM, Ki=15.24 nM) and microbial serine proteases, such as subtilisin A (IC(50)=6.57 nM, Ki=6.83 nM) and proteinase K (IC(50)=7.11 nM, Ki=7.02 nM). Has not activity against trypsin, plasmin, tPA, thrombin, factor Xa or elastase. Binds and inhibits Gram-positive bacteria (B.subtilis (MIC=29.45 uM), B.thuringiensis (MIC=91.03 uM)) and the entomopathogenic fungus B.bassiana (MIC=30.09 uM) but not to E.coli. The sequence is that of Venom serine protease inhibitor BiVSPI from Bombus ignitus (Bumblebee).